The primary structure comprises 218 residues: Probable 1-Cys peroxiredoxin (218 aa).

The 162-residue stretch at 5 to 166 (WALGDLVPDI…VLRVLDSLQL (162 aa)) folds into the Thioredoxin domain. C47 functions as the Cysteine sulfenic acid (-SOH) intermediate in the catalytic mechanism.

It belongs to the peroxiredoxin family. Prx6 subfamily.

The protein resides in the nucleus. It localises to the cytoplasm. It carries out the reaction a hydroperoxide + [thioredoxin]-dithiol = an alcohol + [thioredoxin]-disulfide + H2O. Thiol-specific peroxidase that catalyzes the reduction of hydrogen peroxide and organic hydroperoxides to water and alcohols, respectively. Seems to contribute to the inhibition of germination during stress. Associated with the rehydration events involved in the recovery of the desiccation-tolerant moss. In Syntrichia ruralis (Great hairy screw-moss), this protein is Probable 1-Cys peroxiredoxin.